Here is a 1265-residue protein sequence, read N- to C-terminus: Kinesin-like protein Klp98A (1265 aa).

The Kinesin motor domain occupies 3-364 (SLKVAVRVRP…LRYANRAKNI (362 aa)). 100 to 107 (GQTGSGKT) provides a ligand contact to ATP. 3 disordered regions span residues 597–621 (GASPYKRPERQYYPQRPMSRDDPEL), 828–864 (EAESQAMRAKKQNMKLQLGNKSMSTSTSTNEADDVSK), and 884–954 (VSSP…CTPS). Coiled coils occupy residues 619–670 (PELQ…EEMD) and 768–848 (AQFI…LGNK). 3 stretches are compositionally biased toward polar residues: residues 846–857 (GNKSMSTSTSTN), 884–901 (VSSPTITEGQQSPLSNCS), and 917–927 (SGSSEETSRTC). The span at 933–946 (SGSGSGSVGIGGSG) shows a compositional bias: gly residues. Residues 1035–1071 (DLNKAQLDEHIADLQDLQRRYIQMEQEMLQSVQDLEA) are a coiled coil. In terms of domain architecture, PX spans 1129–1259 (GEHFITIPSF…SFFKKGLFEN (131 aa)).

The protein belongs to the TRAFAC class myosin-kinesin ATPase superfamily. Kinesin family. In terms of assembly, interacts with Atg8a and Rab14.

The protein resides in the early endosome. In terms of biological role, plus end-directed motor protein involved in asymmetric cell division of sensory organ precursor (SOP) cells by playing a role in the asymmetric localization of Sara-expressing endosomes to the pIIa daughter cell but not to the pIIb cell. Targets Sara-expressing endosomes to the central spindle which is symmetrically arranged in early cell division. During late cytokinesis, central spindle asymmetry is generated by enrichment of Patronin on the pIIb side which protects microtubules from depolymerization by Klp10A while unprotected microtubules on the pIIa side are disassembled by Klp10A, leading to the asymmetric delivery of Sara-expressing endosomes to the pIIa daughter cell. Also plays a role in regulation of autophagosome formation, fusion and positioning and is required for normal localization of Rab14. This chain is Kinesin-like protein Klp98A, found in Drosophila melanogaster (Fruit fly).